A 469-amino-acid polypeptide reads, in one-letter code: Argininosuccinate lyase (469 aa).

This sequence belongs to the lyase 1 family. Argininosuccinate lyase subfamily.

Its subcellular location is the cytoplasm. It carries out the reaction 2-(N(omega)-L-arginino)succinate = fumarate + L-arginine. It functions in the pathway amino-acid biosynthesis; L-arginine biosynthesis; L-arginine from L-ornithine and carbamoyl phosphate: step 3/3. In Burkholderia multivorans (strain ATCC 17616 / 249), this protein is Argininosuccinate lyase.